A 639-amino-acid polypeptide reads, in one-letter code: Collagen alpha-1(XII) chain (639 aa).

In terms of domain architecture, VWFA spans 1-114 (CRKSLLQAVA…DSLSKIVDDL (114 aa)). Fibronectin type-III domains are found at residues 130–219 (APSN…LPVP), 220–310 (IVSL…LPLP), 311–401 (RPQD…VPAP), 402–490 (TNLR…SPKS), 491–585 (GPRN…TVRN), and 586–639 (LRVY…LRNL). The interval 473–496 (DESESDDLTGSERTSPKSGPRNLQ) is disordered.

Belongs to the fibril-associated collagens with interrupted helices (FACIT) family. In terms of assembly, trimer of identical chains each containing 190 kDa of non-triple-helical sequences. The triple-helical tail is stabilized by disulfide bonds at each end. Post-translationally, prolines at the third position of the tripeptide repeating unit (G-X-Y) are hydroxylated in some or all of the chains. In terms of processing, O-glycosylated; glycosaminoglycan of chondroitin-sulfate type.

The protein resides in the secreted. The protein localises to the extracellular space. It is found in the extracellular matrix. In terms of biological role, type XII collagen interacts with type I collagen-containing fibrils, the COL1 domain could be associated with the surface of the fibrils, and the COL2 and NC3 domains may be localized in the perifibrillar matrix. The polypeptide is Collagen alpha-1(XII) chain (COL12A1) (Oryctolagus cuniculus (Rabbit)).